Consider the following 446-residue polypeptide: Packaging protein 1 (446 aa).

Positions 1–71 (MEEKAGLGRL…QPQASKPKKH (71 aa)) are disordered. The segment covering 31–43 (FHSDRNHPNKEAE) has biased composition (basic and acidic residues). 170–177 (GPTGCGKS) is a binding site for ATP. A DNA-binding region spans residues 439 to 446 (RYYHSKKK).

This sequence belongs to the adenoviridae packaging protein 1 family. As to quaternary structure, homodimer. Part of a genome packaging complex composed of packaging proteins 1, 2 and 3; this complex specifically binds to the packaging sequence on the left end of viral genomic DNA and performs packaging of the viral genome. Interacts with protein 33K.

The protein resides in the virion. It localises to the host nucleus. It is found in the host nucleoplasm. Its subcellular location is the host nucleolus. In terms of biological role, component of the packaging machinery which encapsidates the viral DNA into preformed capsids and transcriptional activator of the viral major late promoter (MLP). Binds, along with packaging proteins 2 and 3, to the specific packaging sequence on the left end of viral genomic DNA and displays ATPase activity thereby providing the power stroke of the packaging machinery. The activity of packaging protein IVa2 is stimulated by protein 33K which acts as a terminase. May be the protein that pumps DNA into the capsid powered by ATP hydrolysis. Specifically binds to the 5'-CG-3' nucleotides of the repeats making up the packaging sequence. Component of the DEF-A and DEF-B transcription factors that bind downstream elements of the major late promoter (MLP), and stimulate transcription from the MLP after initiation of viral DNA replication. DEF-A is a heterodimer packaging proteins 1 and 2 and DEF-B is a homodimer of packaging protein 1. The chain is Packaging protein 1 from Canine adenovirus serotype 2 (strain Toronto A 26-61) (CAdV-2).